Here is a 504-residue protein sequence, read N- to C-terminus: Probable chlorophyll(ide) b reductase NYC1, chloroplastic (504 aa).

A chloroplast-targeting transit peptide spans 1-33; it reads MAAAAVVHLSVHGRLRRSPELHARPYHRPSLLR. Residues 41 to 63 form a disordered region; sequence ADNGGEEASSSPPPPTTAEARRR. The next 2 helical transmembrane spans lie at 114 to 134 and 141 to 161; these read YVITMMSSGVVLGVGFQLSGG and LIWYSWLGGVIIGTMIGANSV. NAD(+) is bound at residue 175-199; the sequence is ITGSTRGLGKALAREFLLSGDRVVI. The active-site Proton acceptor is Y339. The helical transmembrane segment at 479 to 499 threads the bilayer; the sequence is WVSVFSLSVVCAFIILSSSGG.

The protein belongs to the short-chain dehydrogenases/reductases (SDR) family. As to quaternary structure, interacts with NOL to form a complex that acts as a chlorophyll b reductase. Expressed in leaves and stems. Also detected in non-photosynthetic tissues such as roots.

It is found in the plastid. The protein localises to the chloroplast thylakoid membrane. The enzyme catalyses 7(1)-hydroxychlorophyllide a + NAD(+) = chlorophyllide b + NADH + H(+). It carries out the reaction 7(1)-hydroxychlorophyllide a + NADP(+) = chlorophyllide b + NADPH + H(+). Required for proper chloroplast degradation. Involved in chlorophyll b degradation. The protein is Probable chlorophyll(ide) b reductase NYC1, chloroplastic (NYC1) of Oryza sativa subsp. japonica (Rice).